Consider the following 153-residue polypeptide: MLRLLLLPLFLFTLSMACMGQTFQYSRGWTNGKRAPPAALVTNGHNLGLLDIYDIQDRPTDIKLERCLLQLQHFVGNALLHRSFANGLAYSASRPDPETDVRSINIHSRPGSGNNNIENSLYPNVNHRQSNELFEALNAPGPDAVEPNDYGKH.

Positions 1 to 20 (MLRLLLLPLFLFTLSMACMG) are cleaved as a signal peptide. Q21 carries the post-translational modification Pyrrolidone carboxylic acid. Position 31 is an asparagine amide (N31). Residues 64 to 153 (LERCLLQLQH…AVEPNDYGKH (90 aa)) constitute a propeptide that is removed on maturation.

The protein belongs to the corazonin family. Expression is restricted to 24 neurons in the larval CNS (8 in the brain and 16 in the ventral nerve cord) and 12-16 neurons in the pars lateralis of the adult brain.

The protein localises to the secreted. In terms of biological role, cardioactive peptide. Corazonin is probably involved in the physiological regulation of the heart beat. Clock (Clk) and cycle (cyc) proteins negatively regulate Crz transcription in a cell-specific manner. The polypeptide is Pro-corazonin (Crz) (Drosophila virilis (Fruit fly)).